Here is a 104-residue protein sequence, read N- to C-terminus: MSEIRKNDHRLMQVLLAPVISEKATLVADKNEQVVFEVAPDATKQEVKAAVELLFKVEVDSVNVLVQKGKQKRFGRSMGRRKDVKKAYVCLKPGQEINFEAEAK.

Belongs to the universal ribosomal protein uL23 family. In terms of assembly, part of the 50S ribosomal subunit. Contacts protein L29, and trigger factor when it is bound to the ribosome.

Its function is as follows. One of the early assembly proteins it binds 23S rRNA. One of the proteins that surrounds the polypeptide exit tunnel on the outside of the ribosome. Forms the main docking site for trigger factor binding to the ribosome. The polypeptide is Large ribosomal subunit protein uL23 (Burkholderia multivorans (strain ATCC 17616 / 249)).